Reading from the N-terminus, the 547-residue chain is Chaperonin GroEL (547 aa).

ATP-binding positions include 30 to 33 (TLGP), Lys-51, 87 to 91 (DGTTT), Gly-415, and Asp-496.

This sequence belongs to the chaperonin (HSP60) family. Forms a cylinder of 14 subunits composed of two heptameric rings stacked back-to-back. Interacts with the co-chaperonin GroES.

Its subcellular location is the cytoplasm. It catalyses the reaction ATP + H2O + a folded polypeptide = ADP + phosphate + an unfolded polypeptide.. Its function is as follows. Together with its co-chaperonin GroES, plays an essential role in assisting protein folding. The GroEL-GroES system forms a nano-cage that allows encapsulation of the non-native substrate proteins and provides a physical environment optimized to promote and accelerate protein folding. In Chlorobium limicola (strain DSM 245 / NBRC 103803 / 6330), this protein is Chaperonin GroEL.